The chain runs to 113 residues: Hydrogenase maturation factor HypA (113 aa).

His-2 is a Ni(2+) binding site. Positions 73, 76, 89, and 92 each coordinate Zn(2+).

The protein belongs to the HypA/HybF family.

Its function is as follows. Involved in the maturation of [NiFe] hydrogenases. Required for nickel insertion into the metal center of the hydrogenase. The sequence is that of Hydrogenase maturation factor HypA from Picosynechococcus sp. (strain ATCC 27264 / PCC 7002 / PR-6) (Agmenellum quadruplicatum).